The following is a 394-amino-acid chain: GDNF family receptor alpha-like (394 aa).

The first 18 residues, 1-18 (MIVFIFLAMGLSLENEYT), serve as a signal peptide directing secretion. Residues 19-351 (SQTNNCTYLR…TGFHSPFNGE (333 aa)) are Extracellular-facing. N-linked (GlcNAc...) asparagine glycans are attached at residues asparagine 23, asparagine 50, asparagine 62, asparagine 67, asparagine 103, and asparagine 116. 11 disulfide bridges follow: cysteine 131-cysteine 189, cysteine 138-cysteine 144, cysteine 155-cysteine 167, cysteine 162-cysteine 210, cysteine 191-cysteine 198, cysteine 220-cysteine 291, cysteine 227-cysteine 233, cysteine 244-cysteine 275, cysteine 252-cysteine 258, cysteine 269-cysteine 316, and cysteine 293-cysteine 304. Residues 149-228 (ASYLKACSAN…TCLSVIRSCQ (80 aa)) are required for interaction with GDF15. A helical transmembrane segment spans residues 352 to 371 (VIYAAMCMTVTCGILLLVMV). Residues 372–394 (KLRTSRISSKARDPSSIQIPGEL) are Cytoplasmic-facing.

This sequence belongs to the GDNFR family. In terms of assembly, interacts (via the extracellular domain) with GDF15 and RET; receptor of GDF15, mediates cellular signaling through interaction with RET after GDF15-binding. Interaction with RET requires previous GDF15-binding. Post-translationally, cleaved and inactivated by MMP14, inhibiting the GDF15-GFRAL aversive response. In terms of tissue distribution, expressed in the brainstem, restricted to cells in the area postrema and the immediately adjacent region of the nucleus tractus solitarius (at protein level). Detected at low levels in testis and adipose tissue.

The protein localises to the cell membrane. Specifically inhibited by 3P10 monoclonal antibody. Strongly activated by LY3463251, a long-acting and stable agonist composed of GDF15 conjugated monomeric human IgG4 Fc. Functionally, brainstem-restricted receptor for GDF15 hormone, which triggers an aversive response, characterized by nausea, vomiting, and/or loss of appetite in response to various stresses. The aversive response is both required to reduce continuing exposure to those stresses at the time of exposure and to promote avoidance behavior in the future. The GDF15-GFRAL aversive response is triggered by stresses, such as anticancer drugs (camptothecin or cisplatin), cancers or drugs such as metformin. Upon interaction with its ligand, GDF15, mediates the GDF15-induced autophosphorylation and activation of the RET tyrosine kinase receptor, leading to activation of MAPK- and AKT- signaling pathways. Ligand-binding activates GFRAL-expressing neurons localized in the area postrema and nucleus tractus solitarius of the brainstem. The GDF15-GFRAL signal induces expression of genes involved in metabolism, such as lipid metabolism in adipose tissues. The sequence is that of GDNF family receptor alpha-like from Homo sapiens (Human).